A 229-amino-acid polypeptide reads, in one-letter code: GTP cyclohydrolase 1 (229 aa).

The interval 1-21 (MDAKIKPLRAGKSADARTDFQ) is disordered. Zn(2+)-binding residues include Cys-118, His-121, and Cys-189.

The protein belongs to the GTP cyclohydrolase I family. Toroid-shaped homodecamer, composed of two pentamers of five dimers.

It carries out the reaction GTP + H2O = 7,8-dihydroneopterin 3'-triphosphate + formate + H(+). Its pathway is cofactor biosynthesis; 7,8-dihydroneopterin triphosphate biosynthesis; 7,8-dihydroneopterin triphosphate from GTP: step 1/1. In Rhodopseudomonas palustris (strain HaA2), this protein is GTP cyclohydrolase 1.